A 575-amino-acid polypeptide reads, in one-letter code: Serine/threonine-protein kinase STY46 (575 aa).

The tract at residues 116-140 (ADLDSTSNDAGHSSPTRKSIHPPPA) is disordered. The segment covering 118–132 (LDSTSNDAGHSSPTR) has biased composition (polar residues). An ACT domain is found at 178–252 (EITFSTEDKP…AKIELQSQSW (75 aa)). Positions 290 to 543 (LKFGHKIASG…EIIEQLQEIA (254 aa)) constitute a Protein kinase domain. ATP-binding positions include 296–304 (IASGSYGDL) and K317. D411 acts as the Proton acceptor in catalysis. A Phosphothreonine modification is found at T443.

The protein belongs to the protein kinase superfamily. Ser/Thr protein kinase family. In terms of processing, autophosphorylated on serine and threonine residues. Autophosphorylated at Thr-443.

Its subcellular location is the cytoplasm. The protein localises to the cytosol. It catalyses the reaction L-seryl-[protein] + ATP = O-phospho-L-seryl-[protein] + ADP + H(+). The catalysed reaction is L-threonyl-[protein] + ATP = O-phospho-L-threonyl-[protein] + ADP + H(+). Its activity is regulated as follows. Activated by autophosphorylation at Thr-443. Its function is as follows. Serine/threonine protein kinase that specifically phosphorylates chloroplast precursor proteins in the cytosol within the cleavable presequences (transit peptides). May be part of a cytosolic regulatory network involved in chloroplast protein import. Does not phosphorylate mitochondrion precursor proteins. Specific for ATP and does not utilize other NTPs. Plays a role in chloroplast biogenesis and differentiation in cotyledons, possibly through phosphorylation of chloroplast preproteins. This chain is Serine/threonine-protein kinase STY46, found in Arabidopsis thaliana (Mouse-ear cress).